The sequence spans 808 residues: Protein translocase subunit SecA 2 (808 aa).

ATP is bound by residues Q124, G142–T146, and D535.

It belongs to the SecA family. Monomer and homodimer. Part of the essential Sec protein translocation apparatus which comprises SecA, SecYEG and auxiliary proteins SecDF. Other proteins may also be involved.

It is found in the cell membrane. Its subcellular location is the cytoplasm. The catalysed reaction is ATP + H2O + cellular proteinSide 1 = ADP + phosphate + cellular proteinSide 2.. Part of the Sec protein translocase complex. Interacts with the SecYEG preprotein conducting channel. Has a central role in coupling the hydrolysis of ATP to the transfer of proteins into and across the cell membrane, serving as an ATP-driven molecular motor driving the stepwise translocation of polypeptide chains across the membrane. The chain is Protein translocase subunit SecA 2 from Mycobacterium bovis (strain BCG / Pasteur 1173P2).